We begin with the raw amino-acid sequence, 57 residues long: MKFAKTFLLLFVVLLLLSIVMAEPKRGFGKLLRKVFKVGRRVAGSAAEISGSSGGEE.

Positions 1–24 are cleaved as a signal peptide; that stretch reads MKFAKTFLLLFVVLLLLSIVMAEP.

It belongs to the limacoditoxin-2 (cecropin-like) family. In terms of tissue distribution, expressed by the venom secretory cell of the spine. The spine is a cuticular structure containing a single large nucleated venom-secreting cell at its base. It is an independent unit capable of producing, storing and injecting venom. On the back of D.vulnerans caterpillars, spines are grouped together by 50 to 100 to form scoli, of which there are eight in D.vulnerans.

The protein resides in the secreted. In terms of biological role, peptide that induces pain in mammals and has insecticidal, antibacterial and antiparasitic activities. Induces partially reversible paralysis in D.melanogaster when tested at high doses. Shows a moderate antiparasitic activity against the major pathogenic nematode of ruminants (H.contortus, EC(50)=30.5 uM). Has potent or moderate antibacterial activities against A.baumannii (MIC&lt;0.25 ug/mL) and S.aureus (MIC=16 ug/mL). Has no activity on the other bacteria tested, nor on the fungus C.albicans. Strongly induces the increase of intracellular calcium in mice DRG neurons, which is a proxy for neuronal activation that would occur during nociception. This increase is due to influx of extracellular calcium, suggesting that the peptide forms pore or channel in neuronal cell membranes. In addition, intraplantar injection in mice provokes nocifensive behavior, suggesting a pain-inducing activity. In Doratifera vulnerans (Mottled cup moth), this protein is DELTA-limacoditoxin(2)-Dv11.